A 159-amino-acid chain; its full sequence is Small ribosomal subunit protein uS7c (159 aa).

Residues 137-159 form a disordered region; that stretch reads HAIRKKEETHKMAESNRAXAHYR. Over residues 141 to 150 the composition is skewed to basic and acidic residues; sequence KKEETHKMAE.

It belongs to the universal ribosomal protein uS7 family. Part of the 30S ribosomal subunit.

The protein localises to the plastid. The protein resides in the chloroplast. In terms of biological role, one of the primary rRNA binding proteins, it binds directly to 16S rRNA where it nucleates assembly of the head domain of the 30S subunit. In Sciadopitys verticillata (Japanese umbrella-pine), this protein is Small ribosomal subunit protein uS7c (rps7).